The sequence spans 348 residues: Probable purine nucleoside permease C285.05 (348 aa).

Residues 1 to 21 form the signal peptide; that stretch reads MLFLKLVASVLALMTIVPAQA.

It belongs to the NUP family.

The protein localises to the endoplasmic reticulum. In terms of biological role, probable nucleoside permease that transports adenosine and guanosine. The sequence is that of Probable purine nucleoside permease C285.05 from Schizosaccharomyces pombe (strain 972 / ATCC 24843) (Fission yeast).